Here is a 407-residue protein sequence, read N- to C-terminus: Probable cysteine protease atg4 (407 aa).

The active-site Nucleophile is the cysteine 136. Catalysis depends on residues aspartate 310 and histidine 312.

It belongs to the peptidase C54 family.

The protein resides in the cytoplasm. It localises to the nucleus. It is found in the preautophagosomal structure. It carries out the reaction [protein]-C-terminal L-amino acid-glycyl-phosphatidylethanolamide + H2O = [protein]-C-terminal L-amino acid-glycine + a 1,2-diacyl-sn-glycero-3-phosphoethanolamine. In terms of biological role, cysteine protease that is required for autophagy. Plays a key role in cytoplasm to vacuole transport (Cvt) and autophagy by mediating both proteolytic activation and delipidation of atg8. The protease activity is required for proteolytic activation of atg8 by the cleavage of the C-terminal amino acid of atg8 to reveal a C-terminal glycine. Azg8 ubiquitin-like activity requires the exposure of the glycine at the C-terminus for its conjugation to phosphatidylethanolamine (PE) and its insertion to membranes, which is necessary for autophagy. The atg8-PE conjugate mediates tethering between adjacent membranes and stimulates membrane hemifusion, leading to expansion of the autophagosomal membrane during autophagy. In addition to the protease activity, also catalyzes deconjugation of PE-conjugated forms of atg8 during macroautophagy since atg8 delipidation is required to release the protein from membranes, which facilitates multiple events during macroautophagy, and especially for efficient autophagosome biogenesis, the assembly of atg99-containing tubulovesicular clusters into phagophores/autophagosomes, and for the disassembly of PAS-associated ATG components. Atg8 delipidation by atg4 also recycles atg8-PE generated on inappropriate membranes to maintain a reservoir of unlipidated atg8 that is required for autophagosome formation at the PAS. The chain is Probable cysteine protease atg4 from Aspergillus oryzae (strain ATCC 42149 / RIB 40) (Yellow koji mold).